The chain runs to 341 residues: KH domain-containing RNA-binding protein qki.S (341 aa).

Positions 88–154 (YVPVKEYPDF…WEHLNEDLHV (67 aa)) constitute a KH domain. The short motif at 324–330 (RVHPYQR) is the Nuclear localization signal element.

Belongs to the quaking family. As to quaternary structure, homodimer; does not require RNA to homodimerize.

The protein localises to the nucleus. It localises to the cytoplasm. RNA reader protein, which recognizes and binds specific RNAs, thereby regulating RNA metabolic processes, such as pre-mRNA splicing, circular RNA (circRNA) formation, mRNA export, mRNA stability and/or translation. Involved in various cellular processes, such as mRNA storage into stress granules, apoptosis, interferon response, glial cell fate and development. Binds to the 5'-NACUAAY-N(1,20)-UAAY-3' RNA core sequence. Acts as a mRNA modification reader that specifically recognizes and binds mRNA transcripts modified by internal N(7)-methylguanine (m7G). Promotes the formation of circular RNAs (circRNAs): acts by binding to sites flanking circRNA-forming exons. CircRNAs are produced by back-splicing circularization of pre-mRNAs. Required to protect and promote stability of mRNAs which promotes oligodendrocyte differentiation. Acts as an important regulator of muscle development. Essential for notochord development. This Xenopus laevis (African clawed frog) protein is KH domain-containing RNA-binding protein qki.S.